The chain runs to 535 residues: cAMP-regulated D2 protein (535 aa).

Positions 1-20 (MNKLLVFILLLLLLINISFA) are cleaved as a signal peptide. Cys-89 and Cys-109 are oxidised to a cystine. Ser-213 serves as the catalytic Acyl-ester intermediate. Cys-265 and Cys-272 are disulfide-bonded. Catalysis depends on charge relay system residues Glu-338 and His-440. An N-linked (GlcNAc...) asparagine glycan is attached at Asn-500.

Belongs to the type-B carboxylesterase/lipase family.

Its subcellular location is the cytoplasmic vesicle. It is found in the esterosome membrane. The chain is cAMP-regulated D2 protein (D2) from Dictyostelium discoideum (Social amoeba).